The chain runs to 299 residues: Tyrosine recombinase XerC (299 aa).

The region spanning 1–85 (MKRQLEAYCA…AVRGLYRYLN (85 aa)) is the Core-binding (CB) domain. The 180-residue stretch at 106 to 285 (RLPKVLDTDR…DFQHLAAVYD (180 aa)) folds into the Tyr recombinase domain. Residues Arg-146, Lys-170, His-237, Arg-240, and His-263 contribute to the active site. Tyr-272 serves as the catalytic O-(3'-phospho-DNA)-tyrosine intermediate.

It belongs to the 'phage' integrase family. XerC subfamily. As to quaternary structure, forms a cyclic heterotetrameric complex composed of two molecules of XerC and two molecules of XerD.

Its subcellular location is the cytoplasm. Its function is as follows. Site-specific tyrosine recombinase, which acts by catalyzing the cutting and rejoining of the recombining DNA molecules. The XerC-XerD complex is essential to convert dimers of the bacterial chromosome into monomers to permit their segregation at cell division. It also contributes to the segregational stability of plasmids. The protein is Tyrosine recombinase XerC of Pseudomonas putida (strain ATCC 47054 / DSM 6125 / CFBP 8728 / NCIMB 11950 / KT2440).